A 411-amino-acid polypeptide reads, in one-letter code: 2,3-bisphosphoglycerate-independent phosphoglycerate mutase (411 aa).

The disordered stretch occupies residues 164 to 190; the sequence is VSSNDPKKEGVQPLTIRPGSDDPADAK.

The protein belongs to the BPG-independent phosphoglycerate mutase family. A-PGAM subfamily.

The catalysed reaction is (2R)-2-phosphoglycerate = (2R)-3-phosphoglycerate. The protein operates within carbohydrate degradation; glycolysis; pyruvate from D-glyceraldehyde 3-phosphate: step 3/5. In terms of biological role, catalyzes the interconversion of 2-phosphoglycerate and 3-phosphoglycerate. The chain is 2,3-bisphosphoglycerate-independent phosphoglycerate mutase from Methanoculleus marisnigri (strain ATCC 35101 / DSM 1498 / JR1).